The sequence spans 110 residues: NADH-quinone oxidoreductase subunit K (110 aa).

3 helical membrane-spanning segments follow: residues 13–33 (LNHY…GLFM), 41–61 (ILMS…AFSI), and 73–93 (IIIL…LLIY).

The protein belongs to the complex I subunit 4L family. As to quaternary structure, NDH-1 is composed of 14 different subunits. Subunits NuoA, H, J, K, L, M, N constitute the membrane sector of the complex.

Its subcellular location is the cell inner membrane. The catalysed reaction is a quinone + NADH + 5 H(+)(in) = a quinol + NAD(+) + 4 H(+)(out). Its function is as follows. NDH-1 shuttles electrons from NADH, via FMN and iron-sulfur (Fe-S) centers, to quinones in the respiratory chain. The immediate electron acceptor for the enzyme in this species is believed to be ubiquinone. Couples the redox reaction to proton translocation (for every two electrons transferred, four hydrogen ions are translocated across the cytoplasmic membrane), and thus conserves the redox energy in a proton gradient. This is NADH-quinone oxidoreductase subunit K from Rickettsia conorii (strain ATCC VR-613 / Malish 7).